The primary structure comprises 333 residues: Protoheme IX farnesyltransferase (333 aa).

A run of 8 helical transmembrane segments spans residues 63–83, 109–129, 132–152, 160–180, 188–208, 214–234, 245–265, and 292–312; these read LACTLGGGALAAAAAGVLNCI, AAFIGAISCTLAAAALLVSGV, LAAGLSLLGLCSYVLLYTAIL, IVIGGVAGAIPPLVGAAAASG, WLFSLVMLWTPAHFWALALLL, AVGIPMLPVIQGPVVTVRAIS, GFGVWALPEGGLLYGLLLIPF, and WSIFYMFGICLLLVVSRLPMA.

It belongs to the UbiA prenyltransferase family. Protoheme IX farnesyltransferase subfamily.

Its subcellular location is the cell inner membrane. The enzyme catalyses heme b + (2E,6E)-farnesyl diphosphate + H2O = Fe(II)-heme o + diphosphate. It participates in porphyrin-containing compound metabolism; heme O biosynthesis; heme O from protoheme: step 1/1. Converts heme B (protoheme IX) to heme O by substitution of the vinyl group on carbon 2 of heme B porphyrin ring with a hydroxyethyl farnesyl side group. This chain is Protoheme IX farnesyltransferase, found in Prochlorococcus marinus (strain MIT 9313).